A 115-amino-acid polypeptide reads, in one-letter code: UPF0127 protein PH1112 (115 aa).

Belongs to the UPF0127 family.

This Pyrococcus horikoshii (strain ATCC 700860 / DSM 12428 / JCM 9974 / NBRC 100139 / OT-3) protein is UPF0127 protein PH1112.